We begin with the raw amino-acid sequence, 424 residues long: Histidine--tRNA ligase (424 aa).

The protein belongs to the class-II aminoacyl-tRNA synthetase family. In terms of assembly, homodimer.

It is found in the cytoplasm. It carries out the reaction tRNA(His) + L-histidine + ATP = L-histidyl-tRNA(His) + AMP + diphosphate + H(+). In Shigella sonnei (strain Ss046), this protein is Histidine--tRNA ligase.